We begin with the raw amino-acid sequence, 577 residues long: Arginine--tRNA ligase (577 aa).

A 'HIGH' region motif is present at residues 122–132 (PNVAKEMHVGH).

Belongs to the class-I aminoacyl-tRNA synthetase family. Monomer.

It is found in the cytoplasm. The catalysed reaction is tRNA(Arg) + L-arginine + ATP = L-arginyl-tRNA(Arg) + AMP + diphosphate. In Klebsiella pneumoniae (strain 342), this protein is Arginine--tRNA ligase.